Reading from the N-terminus, the 695-residue chain is Potassium voltage-gated channel subfamily KQT member 4 (695 aa).

The disordered stretch occupies residues 1-21 (MAEAPPRRLGLGPPPGDAPRA). At 1–96 (MAEAPPRRLG…VYNVLERPRG (96 aa)) the chain is on the cytoplasmic side. R93 is a binding site for a 1,2-diacyl-sn-glycero-3-phospho-(1D-myo-inositol-4,5-bisphosphate). Residues 97–118 (WAFVYHVFIFLLVFSCLVLSVL) traverse the membrane as a helical segment. The Extracellular segment spans residues 119 to 129 (STIQEHQELAN). The chain crosses the membrane as a helical span at residues 130–152 (ECLLILEFVMIVVFGLEYIIRVW). Residues 153–168 (SAGCCCRYRGWQGRFR) lie on the Cytoplasmic side of the membrane. Residues 169–191 (FARKPFCVIDFIVFVASVAVIAA) form a helical membrane-spanning segment. A 1,2-diacyl-sn-glycero-3-phospho-(1D-myo-inositol-4,5-bisphosphate) is bound at residue K172. The Extracellular segment spans residues 192-202 (GTQGNIFATSA). A helical; Voltage-sensor transmembrane segment spans residues 203–223 (LRSMRFLQILRMVRMDRRGGT). 4 residues coordinate a 1,2-diacyl-sn-glycero-3-phospho-(1D-myo-inositol-4,5-bisphosphate): R219, R220, K225, and S235. Residues 224 to 235 (WKLLGSVVYAHS) are Cytoplasmic-facing. The helical transmembrane segment at 236-258 (KELITAWYIGFLVLIFASFLVYL) threads the bilayer. Over 259-270 (AEKDANSDFSSY) the chain is Extracellular. The pore-forming intramembrane region spans 271 to 292 (ADSLWWGTITLTTIGYGDKTPH). Residue T293 is a topological domain, extracellular. Residues 294 to 322 (WLGRVLAAGFALLGISFFALPAGILGSGF) traverse the membrane as a helical segment. Over 323 to 695 (ALKVQEQHRQ…ISRSVSTNMD (373 aa)) the chain is Cytoplasmic. H330 and K333 together coordinate a 1,2-diacyl-sn-glycero-3-phospho-(1D-myo-inositol-4,5-bisphosphate). The interaction with CALM stretch occupies residues 342–351 (AANLIQAAWR). The disordered stretch occupies residues 441 to 483 (RMSSSQKRTGPSKQHLAPPPIPTSPSSEQVGEASSPSKVQKSW). 2 stretches are compositionally biased toward polar residues: residues 442–452 (MSSSQKRTGPS) and 464–483 (SPSS…QKSW). An interaction with CALM region spans residues 535-549 (RSVRILKFLVAKRKF). Residues 546–650 (KRKFKETLRP…SRCLRSGTSA (105 aa)) are C-terminal assembly domain (tetramerization). The interval 588 to 608 (GRGPGDRKTREKGDKGPSDTE) is disordered. Residues 591–605 (PGDRKTREKGDKGPS) are compositionally biased toward basic and acidic residues.

It belongs to the potassium channel family. KQT (TC 1.A.1.15) subfamily. Kv7.4/KCNQ4 sub-subfamily. In terms of assembly, homotetramer. Interacts (via C-terminus) with calmodulin; forms a heterooctameric structure (with 4:4 KCNQ1:CALM stoichiometry); the interaction is calcium-independent, constitutive, participates in the proper assembly of a functional channel. The interaction with calcium-free CALM controls channel trafficking whereas interaction with calcium-bound CALM regulates channel gating. May form a functional heteromultimeric channel with KCNQ3. Interacts with HSP90AB1; promotes cell surface expression of KCNQ4. Expressed in both the inner (IHCs) and the outer hair cells (OHCs) of the cochlea. Reciprocal longitudinal gradients of expression is present in IHCs and OHCs. The strongest expression in IHCs is in the base of the cochlea and in the apex for OHCs. A basal to apical gradient of expression is also present in both type I and type II spiral ganglion cells.

The protein localises to the basal cell membrane. The catalysed reaction is K(+)(in) = K(+)(out). Its activity is regulated as follows. Two molecules of phosphatidylinositol-4,5-bisphosphate (PIP2-I and PIP2-II) are essential to activate KCNQ4 channel by inducing the coupling of the voltage-sensing domain (VSD) and the pore-forming domain (PD). Upon channel activation, PIP2-I and PIP2-II disrupt the VSD-calmodulin/CALM interaction, causing the release of CALM from the VSD which triggers the opening of the gate. Calcium suppresses KCNQ4 channel current through calcium-bound CALM C-terminus. Therefore CALM acts as calcium sensor that controls channel activity. Pore-forming subunit of the voltage-gated potassium (Kv) channel involved in the regulation of sensory cells excitability in the cochlea. KCNQ4/Kv7.4 channel is composed of 4 pore-forming subunits assembled as tetramers. Promotes the outflow of potassium ions in the repolarization phase of action potential which plays a role in regulating membrane potential of excitable cells. The channel conducts a slowly activating and deactivating current. Current often shows some inward rectification at positive potentials. Channel may be selectively permeable in vitro to other cations besides potassium, in decreasing order of affinity K(+) = Rb(+) &gt; Cs(+) &gt; Na(+). Important for normal physiological function of inner ear such as sensory perception of sound. The sequence is that of Potassium voltage-gated channel subfamily KQT member 4 from Rattus norvegicus (Rat).